The following is an 85-amino-acid chain: Small ribosomal subunit protein eS21 (85 aa).

Belongs to the eukaryotic ribosomal protein eS21 family. Component of the 40S small ribosomal subunit.

The protein localises to the cytoplasm. It localises to the cytosol. It is found in the rough endoplasmic reticulum. In Branchiostoma belcheri (Amphioxus), this protein is Small ribosomal subunit protein eS21 (RPS21).